Here is a 353-residue protein sequence, read N- to C-terminus: Photosystem II protein D1 (353 aa).

T2 is modified (N-acetylthreonine). T2 is subject to Phosphothreonine. 3 helical membrane passes run 29–46 (YIGW…TATS), 118–133 (HFLL…EWEL), and 142–156 (WIAV…AATA). H118 contacts chlorophyll a. Position 126 (Y126) interacts with pheophytin a. The [CaMn4O5] cluster site is built by D170 and E189. Residues 197-218 (FHMLGVAGVFGGSLFSAMHGSL) form a helical membrane-spanning segment. Position 198 (H198) interacts with chlorophyll a. Residues H215 and 264-265 (SF) each bind a quinone. H215 provides a ligand contact to Fe cation. H272 is a Fe cation binding site. A helical membrane pass occupies residues 274-288 (FLAAWPVIGIWFTAL). [CaMn4O5] cluster-binding residues include H332, E333, D342, and A344. A propeptide spanning residues 345–353 (AIEAPSTNG) is cleaved from the precursor.

This sequence belongs to the reaction center PufL/M/PsbA/D family. In terms of assembly, PSII is composed of 1 copy each of membrane proteins PsbA, PsbB, PsbC, PsbD, PsbE, PsbF, PsbH, PsbI, PsbJ, PsbK, PsbL, PsbM, PsbT, PsbX, PsbY, PsbZ, Psb30/Ycf12, at least 3 peripheral proteins of the oxygen-evolving complex and a large number of cofactors. It forms dimeric complexes. It depends on The D1/D2 heterodimer binds P680, chlorophylls that are the primary electron donor of PSII, and subsequent electron acceptors. It shares a non-heme iron and each subunit binds pheophytin, quinone, additional chlorophylls, carotenoids and lipids. D1 provides most of the ligands for the Mn4-Ca-O5 cluster of the oxygen-evolving complex (OEC). There is also a Cl(-1) ion associated with D1 and D2, which is required for oxygen evolution. The PSII complex binds additional chlorophylls, carotenoids and specific lipids. as a cofactor. Tyr-161 forms a radical intermediate that is referred to as redox-active TyrZ, YZ or Y-Z. In terms of processing, C-terminally processed by CTPA; processing is essential to allow assembly of the oxygen-evolving complex and thus photosynthetic growth.

The protein resides in the plastid. Its subcellular location is the chloroplast thylakoid membrane. The enzyme catalyses 2 a plastoquinone + 4 hnu + 2 H2O = 2 a plastoquinol + O2. Its function is as follows. Photosystem II (PSII) is a light-driven water:plastoquinone oxidoreductase that uses light energy to abstract electrons from H(2)O, generating O(2) and a proton gradient subsequently used for ATP formation. It consists of a core antenna complex that captures photons, and an electron transfer chain that converts photonic excitation into a charge separation. The D1/D2 (PsbA/PsbD) reaction center heterodimer binds P680, the primary electron donor of PSII as well as several subsequent electron acceptors. This is Photosystem II protein D1 from Amaranthus hybridus (Slim amaranth).